Reading from the N-terminus, the 352-residue chain is F-box/kelch-repeat protein At1g57790 (352 aa).

The 47-residue stretch at 10–56 folds into the F-box domain; the sequence is KNLWKDLPLELLSSVMTFLEIKDNVRASVVCKSWFEAAVSVRVIDKS. Kelch repeat units lie at residues 148–189 and 190–234; these read VVFT…HNNV and VFSN…WNEG.

The sequence is that of F-box/kelch-repeat protein At1g57790 from Arabidopsis thaliana (Mouse-ear cress).